We begin with the raw amino-acid sequence, 261 residues long: Cytochrome c oxidase subunit 3 (261 aa).

The Mitochondrial matrix portion of the chain corresponds to 1–15 (MTHQLHQYHLVDPSP). The chain crosses the membrane as a helical span at residues 16 to 34 (WPLTGAMGSLLLASGLAVW). Residues 35–40 (FHTNNT) lie on the Mitochondrial intermembrane side of the membrane. Residues 41-66 (MLLKFGLLTLLLTMFQWWRDIIREST) form a helical membrane-spanning segment. The Mitochondrial matrix segment spans residues 67-72 (YQGHHT). The chain crosses the membrane as a helical span at residues 73–105 (SGVQKNMRYGMILFITSEVFFFLGFFWALYHVS). The Mitochondrial intermembrane portion of the chain corresponds to 106–128 (LVPTPELGAEWPPIGITPLNPME). The helical transmembrane segment at 129–152 (VPLLNTAVLLSSGATITWSHHTMM) threads the bilayer. Residues 153-155 (KGN) lie on the Mitochondrial matrix side of the membrane. The chain crosses the membrane as a helical span at residues 156–183 (KKEATHALMLTIILGAYFTALQLSEYME). Topologically, residues 184-190 (TPFTIAD) are mitochondrial intermembrane. Residues 191-223 (SVYGSLFFVATGFHGLHVMIGTSFLMVCALRLA) form a helical membrane-spanning segment. Over 224–232 (KHHFTITHH) the chain is Mitochondrial matrix. Residues 233–256 (FGYEAAIWYWHFVDIVWLFLYISV) traverse the membrane as a helical segment. The Mitochondrial intermembrane segment spans residues 257–261 (YWWGS).

It belongs to the cytochrome c oxidase subunit 3 family. As to quaternary structure, component of the cytochrome c oxidase (complex IV, CIV), a multisubunit enzyme composed of 14 subunits. The complex is composed of a catalytic core of 3 subunits MT-CO1, MT-CO2 and MT-CO3, encoded in the mitochondrial DNA, and 11 supernumerary subunits COX4I, COX5A, COX5B, COX6A, COX6B, COX6C, COX7A, COX7B, COX7C, COX8 and NDUFA4, which are encoded in the nuclear genome. The complex exists as a monomer or a dimer and forms supercomplexes (SCs) in the inner mitochondrial membrane with NADH-ubiquinone oxidoreductase (complex I, CI) and ubiquinol-cytochrome c oxidoreductase (cytochrome b-c1 complex, complex III, CIII), resulting in different assemblies (supercomplex SCI(1)III(2)IV(1) and megacomplex MCI(2)III(2)IV(2)).

Its subcellular location is the mitochondrion inner membrane. The catalysed reaction is 4 Fe(II)-[cytochrome c] + O2 + 8 H(+)(in) = 4 Fe(III)-[cytochrome c] + 2 H2O + 4 H(+)(out). In terms of biological role, component of the cytochrome c oxidase, the last enzyme in the mitochondrial electron transport chain which drives oxidative phosphorylation. The respiratory chain contains 3 multisubunit complexes succinate dehydrogenase (complex II, CII), ubiquinol-cytochrome c oxidoreductase (cytochrome b-c1 complex, complex III, CIII) and cytochrome c oxidase (complex IV, CIV), that cooperate to transfer electrons derived from NADH and succinate to molecular oxygen, creating an electrochemical gradient over the inner membrane that drives transmembrane transport and the ATP synthase. Cytochrome c oxidase is the component of the respiratory chain that catalyzes the reduction of oxygen to water. Electrons originating from reduced cytochrome c in the intermembrane space (IMS) are transferred via the dinuclear copper A center (CU(A)) of subunit 2 and heme A of subunit 1 to the active site in subunit 1, a binuclear center (BNC) formed by heme A3 and copper B (CU(B)). The BNC reduces molecular oxygen to 2 water molecules using 4 electrons from cytochrome c in the IMS and 4 protons from the mitochondrial matrix. The chain is Cytochrome c oxidase subunit 3 (MT-CO3) from Lycodon semicarinatus (Ryukyu odd-tooth snake).